The sequence spans 695 residues: HIPL1 protein (695 aa).

Residues 1 to 23 (MKLHQFLVFLFLFLSCFALSSWA) form the signal peptide. N-linked (GlcNAc...) asparagine glycosylation is found at N37, N67, N107, N113, N128, N151, N175, N190, N208, N337, N429, N511, N527, N641, and N648. The GPI-anchor amidated serine moiety is linked to residue S665. The propeptide at 666–695 (SSCYKHINGFHGSLVVLFVSLSLILLGLLN) is removed in mature form.

It belongs to the PQQ oxidoreductase GdhB family. The cofactor is pyrroloquinoline quinone.

It is found in the cell membrane. The protein is HIPL1 protein (HIPL1) of Arabidopsis thaliana (Mouse-ear cress).